Reading from the N-terminus, the 746-residue chain is NAD(P)H-quinone oxidoreductase subunit 5, chloroplastic (746 aa).

The next 16 helical transmembrane spans lie at 9 to 29 (WIIP…LLLF), 40 to 60 (WAFP…DLSI), 89 to 109 (IDSL…LVLI), 121 to 140 (YLRF…GLVT), 147 to 167 (VYIF…FWFT), 185 to 205 (GDFG…SLEF), 219 to 239 (NEVN…GSVA), 258 to 278 (TPIS…FLVA), 280 to 300 (LLPL…IGII), 327 to 347 (LGYM…FHLI), 354 to 374 (ALLF…VGYS), 396 to 416 (MSFL…CFWS), 425 to 445 (WLYS…TAFY), 552 to 572 (LFSM…GISF), 606 to 626 (FFIN…IASF), and 726 to 746 (SYIF…YLFP).

This sequence belongs to the complex I subunit 5 family. As to quaternary structure, NDH is composed of at least 16 different subunits, 5 of which are encoded in the nucleus.

The protein resides in the plastid. The protein localises to the chloroplast thylakoid membrane. It catalyses the reaction a plastoquinone + NADH + (n+1) H(+)(in) = a plastoquinol + NAD(+) + n H(+)(out). The catalysed reaction is a plastoquinone + NADPH + (n+1) H(+)(in) = a plastoquinol + NADP(+) + n H(+)(out). In terms of biological role, NDH shuttles electrons from NAD(P)H:plastoquinone, via FMN and iron-sulfur (Fe-S) centers, to quinones in the photosynthetic chain and possibly in a chloroplast respiratory chain. The immediate electron acceptor for the enzyme in this species is believed to be plastoquinone. Couples the redox reaction to proton translocation, and thus conserves the redox energy in a proton gradient. The protein is NAD(P)H-quinone oxidoreductase subunit 5, chloroplastic (ndhF) of Vicia faba (Broad bean).